We begin with the raw amino-acid sequence, 161 residues long: Nucleotide-binding protein Veis_3464 (161 aa).

It belongs to the YajQ family.

Functionally, nucleotide-binding protein. This Verminephrobacter eiseniae (strain EF01-2) protein is Nucleotide-binding protein Veis_3464.